A 106-amino-acid chain; its full sequence is UPF0060 membrane protein Rleg2_1018 (106 aa).

Helical transmembrane passes span 4-24 (IIYAFAAVFEIGGCFAFWAWL), 30-50 (VWWLAPGMVSLALFAWLLTLV), 58-78 (TFAAYGGIYIAASLLWLWLVE), and 86-106 (DIGGALVCLAGTSIILFGPRG).

This sequence belongs to the UPF0060 family.

Its subcellular location is the cell inner membrane. This Rhizobium leguminosarum bv. trifolii (strain WSM2304) protein is UPF0060 membrane protein Rleg2_1018.